Here is a 440-residue protein sequence, read N- to C-terminus: D-serine dehydratase (440 aa).

Lys-116 is subject to N6-(pyridoxal phosphate)lysine.

This sequence belongs to the serine/threonine dehydratase family. DsdA subfamily. In terms of assembly, monomer. Pyridoxal 5'-phosphate is required as a cofactor.

It catalyses the reaction D-serine = pyruvate + NH4(+). The chain is D-serine dehydratase from Salmonella paratyphi A (strain ATCC 9150 / SARB42).